Consider the following 271-residue polypeptide: Phosphatidylglycerol--prolipoprotein diacylglyceryl transferase (271 aa).

A run of 4 helical transmembrane segments spans residues Leu-18–Ala-38, Ile-51–Tyr-71, Ile-89–Val-109, and Gly-115–Ile-135. Residue Arg-137 participates in a 1,2-diacyl-sn-glycero-3-phospho-(1'-sn-glycerol) binding. 3 helical membrane passes run His-177–Leu-197, Gly-205–Met-225, and Leu-236–Phe-256.

The protein belongs to the Lgt family.

The protein localises to the cell membrane. The enzyme catalyses L-cysteinyl-[prolipoprotein] + a 1,2-diacyl-sn-glycero-3-phospho-(1'-sn-glycerol) = an S-1,2-diacyl-sn-glyceryl-L-cysteinyl-[prolipoprotein] + sn-glycerol 1-phosphate + H(+). The protein operates within protein modification; lipoprotein biosynthesis (diacylglyceryl transfer). Functionally, catalyzes the transfer of the diacylglyceryl group from phosphatidylglycerol to the sulfhydryl group of the N-terminal cysteine of a prolipoprotein, the first step in the formation of mature lipoproteins. The polypeptide is Phosphatidylglycerol--prolipoprotein diacylglyceryl transferase (Bacillus velezensis (strain DSM 23117 / BGSC 10A6 / LMG 26770 / FZB42) (Bacillus amyloliquefaciens subsp. plantarum)).